The sequence spans 344 residues: Phosphoribosylformylglycinamidine cyclo-ligase (344 aa).

It belongs to the AIR synthase family.

The protein localises to the cytoplasm. It carries out the reaction 2-formamido-N(1)-(5-O-phospho-beta-D-ribosyl)acetamidine + ATP = 5-amino-1-(5-phospho-beta-D-ribosyl)imidazole + ADP + phosphate + H(+). It functions in the pathway purine metabolism; IMP biosynthesis via de novo pathway; 5-amino-1-(5-phospho-D-ribosyl)imidazole from N(2)-formyl-N(1)-(5-phospho-D-ribosyl)glycinamide: step 2/2. This is Phosphoribosylformylglycinamidine cyclo-ligase from Neisseria meningitidis serogroup B (strain ATCC BAA-335 / MC58).